We begin with the raw amino-acid sequence, 225 residues long: uncharacterized protein (225 aa).

In terms of domain architecture, PCI spans 166–214 (LNSDVIKDKILAIIENVGEITYEELAEKINIPEEDLEKYLSELKESGDI).

This is an uncharacterized protein from Methanocaldococcus jannaschii (strain ATCC 43067 / DSM 2661 / JAL-1 / JCM 10045 / NBRC 100440) (Methanococcus jannaschii).